A 79-amino-acid chain; its full sequence is Small ribosomal subunit protein bS16c (79 aa).

Belongs to the bacterial ribosomal protein bS16 family.

The protein resides in the plastid. It localises to the chloroplast. This Trieres chinensis (Marine centric diatom) protein is Small ribosomal subunit protein bS16c.